The following is a 457-amino-acid chain: Ribosome biogenesis protein YTM1 (457 aa).

The segment at 8-89 (VKVKFFTREK…ETTLTVEYTR (82 aa)) is ubiquitin-like (UBL) domain. Residues 99 to 457 (NFNNDDWVSA…INKGDNIFKN (359 aa)) form a sufficient for interaction with ERB1 and association with 66S pre-ribosomes region. WD repeat units follow at residues 101–140 (NNDD…EKQY), 142–180 (GHTG…GSVS), 203–241 (GHKA…MTAI), 282–322 (SHTG…CIDT), 324–363 (TTSY…SAKI), 370–410 (GHKN…PMYT), and 421–457 (GVND…IFKN). The disordered stretch occupies residues 172 to 191 (TKNDDGSVSNNTGDENDEEN).

It belongs to the WD repeat WDR12/YTM1 family. As to quaternary structure, component of the NOP7 complex, composed of ERB1, NOP7 and YTM1. The complex is held together by ERB1, which interacts with NOP7 via its N-terminal domain and with YTM1 via a high-affinity interaction between the seven-bladed beta-propeller domains of the 2 proteins. The NOP7 complex associates with the 66S pre-ribosome. Interacts (via UBL domain) with MDN1 (via VWFA/MIDAS domain).

It is found in the nucleus. The protein localises to the nucleolus. Its subcellular location is the nucleoplasm. Component of the NOP7 complex, which is required for maturation of the 25S and 5.8S ribosomal RNAs and formation of the 60S ribosome. This is Ribosome biogenesis protein YTM1 from Candida glabrata (strain ATCC 2001 / BCRC 20586 / JCM 3761 / NBRC 0622 / NRRL Y-65 / CBS 138) (Yeast).